The primary structure comprises 487 residues: Glutamate--tRNA ligase 2 (487 aa).

Positions 31–41 (PSPTGHLHVGG) match the 'HIGH' region motif. The 'KMSKS' region motif lies at 254-258 (PLSKR). K257 contributes to the ATP binding site.

The protein belongs to the class-I aminoacyl-tRNA synthetase family. Glutamate--tRNA ligase type 1 subfamily. Monomer.

It is found in the cytoplasm. It catalyses the reaction tRNA(Glu) + L-glutamate + ATP = L-glutamyl-tRNA(Glu) + AMP + diphosphate. Functionally, catalyzes the attachment of glutamate to tRNA(Glu) in a two-step reaction: glutamate is first activated by ATP to form Glu-AMP and then transferred to the acceptor end of tRNA(Glu). The sequence is that of Glutamate--tRNA ligase 2 from Thermotoga maritima (strain ATCC 43589 / DSM 3109 / JCM 10099 / NBRC 100826 / MSB8).